Reading from the N-terminus, the 463-residue chain is Asparagine--tRNA ligase (463 aa).

The protein belongs to the class-II aminoacyl-tRNA synthetase family. As to quaternary structure, homodimer.

It localises to the cytoplasm. It catalyses the reaction tRNA(Asn) + L-asparagine + ATP = L-asparaginyl-tRNA(Asn) + AMP + diphosphate + H(+). The protein is Asparagine--tRNA ligase of Nostoc sp. (strain PCC 7120 / SAG 25.82 / UTEX 2576).